A 207-amino-acid chain; its full sequence is Alpha-1-acid glycoprotein 1 (207 aa).

The first 18 residues, 1 to 18 (MALHMILVMLSLLPLLEA), serve as a signal peptide directing secretion. Gln-19 bears the Pyrrolidone carboxylic acid mark. N-linked (GlcNAc...) asparagine glycans are attached at residues Asn-25, Asn-34, Asn-76, Asn-94, and Asn-104. Cys-91 and Cys-184 are oxidised to a cystine.

This sequence belongs to the calycin superfamily. Lipocalin family. In terms of tissue distribution, expressed by the liver and secreted in plasma.

The protein localises to the secreted. Functions as a transport protein in the blood stream. Binds various ligands in the interior of its beta-barrel domain. Appears to function in modulating the activity of the immune system during the acute-phase reaction. The polypeptide is Alpha-1-acid glycoprotein 1 (Orm1) (Mus caroli (Ryukyu mouse)).